Consider the following 349-residue polypeptide: METNFSIPLNETEEVLPEPAGHTVLWIFSLLVHGVTFIFGVLGNGLVIWVAGFRMTRTVNTICYLNLALADFSFSAILPFHMVSVAMREKWPFGTFLCKLVHVMIDINLFVSVYLITIIALDRCICVLHPAWAQNHRTMSLAKRVMTGLWILTIVLTLPNFIFWTTISTTNGDTYCIFNYPFWGDTVVERMNVFITMAKVSLILHFIIGFSIPMSIITVCYGIIVAKIHKKRMTKSSRPLHIFTAVVASFFICWFPYELTGILMAVWLKEILLNGKYKIILVLINPTSSLAFFNSCLNPSLYVFMGHNFQERLIRSLPTSLERALTEVPDSAQTSNTHTTSASPPEETE.

The Extracellular segment spans residues 1 to 27 (METNFSIPLNETEEVLPEPAGHTVLWI). N-linked (GlcNAc...) asparagine glycosylation is found at Asn-4 and Asn-10. The helical transmembrane segment at 28 to 50 (FSLLVHGVTFIFGVLGNGLVIWV) threads the bilayer. Residues 51–61 (AGFRMTRTVNT) lie on the Cytoplasmic side of the membrane. A helical membrane pass occupies residues 62-83 (ICYLNLALADFSFSAILPFHMV). Over 84–100 (SVAMREKWPFGTFLCKL) the chain is Extracellular. Cys-98 and Cys-176 are oxidised to a cystine. The chain crosses the membrane as a helical span at residues 101-121 (VHVMIDINLFVSVYLITIIAL). Residues 122–140 (DRCICVLHPAWAQNHRTMS) are Cytoplasmic-facing. The helical transmembrane segment at 141–162 (LAKRVMTGLWILTIVLTLPNFI) threads the bilayer. At 163–205 (FWTTISTTNGDTYCIFNYPFWGDTVVERMNVFITMAKVSLILH) the chain is on the extracellular side. A helical membrane pass occupies residues 206–226 (FIIGFSIPMSIITVCYGIIVA). Residues 227 to 242 (KIHKKRMTKSSRPLHI) are Cytoplasmic-facing. The helical transmembrane segment at 243–266 (FTAVVASFFICWFPYELTGILMAV) threads the bilayer. At 267 to 286 (WLKEILLNGKYKIILVLINP) the chain is on the extracellular side. A helical membrane pass occupies residues 287–306 (TSSLAFFNSCLNPSLYVFMG). Topologically, residues 307–349 (HNFQERLIRSLPTSLERALTEVPDSAQTSNTHTTSASPPEETE) are cytoplasmic. Positions 327–349 (EVPDSAQTSNTHTTSASPPEETE) are disordered. Residues 331-343 (SAQTSNTHTTSAS) are compositionally biased toward polar residues.

Belongs to the G-protein coupled receptor 1 family.

It is found in the cell membrane. Functionally, low affinity receptor for N-formyl-methionyl peptides, which are powerful neutrophils chemotactic factors. Binding of FMLP to the receptor causes activation of neutrophils. This response is mediated via a G-protein that activates a phosphatidylinositol-calcium second messenger system. This is N-formyl peptide receptor 3 (FPR3) from Macaca mulatta (Rhesus macaque).